Here is a 226-residue protein sequence, read N- to C-terminus: Ribose-5-phosphate isomerase A (226 aa).

Substrate-binding positions include 32 to 35, 85 to 88, and 98 to 101; these read TGST, DGAD, and KGGG. Glu107 serves as the catalytic Proton acceptor. Lys125 serves as a coordination point for substrate.

The protein belongs to the ribose 5-phosphate isomerase family. In terms of assembly, homodimer.

The enzyme catalyses aldehydo-D-ribose 5-phosphate = D-ribulose 5-phosphate. It participates in carbohydrate degradation; pentose phosphate pathway; D-ribose 5-phosphate from D-ribulose 5-phosphate (non-oxidative stage): step 1/1. Its function is as follows. Catalyzes the reversible conversion of ribose-5-phosphate to ribulose 5-phosphate. The polypeptide is Ribose-5-phosphate isomerase A (Saccharophagus degradans (strain 2-40 / ATCC 43961 / DSM 17024)).